The chain runs to 66 residues: Large ribosomal subunit protein uL29 (66 aa).

Belongs to the universal ribosomal protein uL29 family.

This Syntrophobacter fumaroxidans (strain DSM 10017 / MPOB) protein is Large ribosomal subunit protein uL29.